A 438-amino-acid polypeptide reads, in one-letter code: MSQANAATKASSDVFFNASLEDIDPEIFGAIRNELGRQRHEIELIASENIVSRAVLEAQGSILTNKYAEGYPGKRYYGGCQYVDVVEELAIERAKKLFGAEFVNVQPNSGSQMNQAVFLALLQPGDTFMGLDLNSGGHLTHGSPVNMSGKWFNVVSYGVRKDDHLLDMDEVARPARENKPKLILAGGTAYSRIWDWKRFREIADEVGAYLMVDMAHIAGLVAGGQHPSPVPHAHVCTTTTHKSLRGPRGGMILTNDADIAKKINSAVFPGLQGGPLMHVIAGKAVAFAEALKPEFKLYAKNVVDNARALAEELKSHGLDIVSGGTDNHLMLVDLRPKNATGKRAEAALGRANITCNKNGIPFDPEKPFVTSGVRLGTPAGTTRGFGVAEFKEIGSLIAEVLDGLKVANSDEGNAAVEQAVKEKVIALTGRFPMYGYQG.

(6S)-5,6,7,8-tetrahydrofolate contacts are provided by residues leucine 133 and 137–139 (GHL). Lysine 242 is modified (N6-(pyridoxal phosphate)lysine).

Belongs to the SHMT family. In terms of assembly, homodimer. Requires pyridoxal 5'-phosphate as cofactor.

It is found in the cytoplasm. It carries out the reaction (6R)-5,10-methylene-5,6,7,8-tetrahydrofolate + glycine + H2O = (6S)-5,6,7,8-tetrahydrofolate + L-serine. Its pathway is one-carbon metabolism; tetrahydrofolate interconversion. The protein operates within amino-acid biosynthesis; glycine biosynthesis; glycine from L-serine: step 1/1. In terms of biological role, catalyzes the reversible interconversion of serine and glycine with tetrahydrofolate (THF) serving as the one-carbon carrier. This reaction serves as the major source of one-carbon groups required for the biosynthesis of purines, thymidylate, methionine, and other important biomolecules. Also exhibits THF-independent aldolase activity toward beta-hydroxyamino acids, producing glycine and aldehydes, via a retro-aldol mechanism. This Brucella ovis (strain ATCC 25840 / 63/290 / NCTC 10512) protein is Serine hydroxymethyltransferase.